Consider the following 217-residue polypeptide: Probable septum site-determining protein MinC (217 aa).

Belongs to the MinC family. As to quaternary structure, interacts with MinD and FtsZ.

Cell division inhibitor that blocks the formation of polar Z ring septums. Rapidly oscillates between the poles of the cell to destabilize FtsZ filaments that have formed before they mature into polar Z rings. Prevents FtsZ polymerization. This chain is Probable septum site-determining protein MinC, found in Pelotomaculum thermopropionicum (strain DSM 13744 / JCM 10971 / SI).